Consider the following 623-residue polypeptide: Kelch-like protein diablo (623 aa).

The segment at M1–H54 is disordered. Residue T19 is modified to Phosphothreonine. The segment covering G20–S32 has biased composition (gly residues). The 68-residue stretch at C72 to E139 folds into the BTB domain. The region spanning C174–G276 is the BACK domain. 6 Kelch repeats span residues V323–D369, L371–G417, F418–G464, L466–N511, I513–G558, and Q559–A605.

It participates in protein modification; protein ubiquitination. Functionally, probable substrate-specific adapter of an E3 ubiquitin-protein ligase complex which mediates the ubiquitination and subsequent proteasomal degradation of target proteins. May have a role in synapse differentiation and growth. This chain is Kelch-like protein diablo, found in Drosophila melanogaster (Fruit fly).